Reading from the N-terminus, the 1411-residue chain is DNA-directed RNA polymerase subunit beta' (1411 aa).

Zn(2+) is bound by residues Cys-69, Cys-71, Cys-84, and Cys-87. Mg(2+) contacts are provided by Asp-461, Asp-463, and Asp-465. Positions 809, 883, 890, and 893 each coordinate Zn(2+).

It belongs to the RNA polymerase beta' chain family. In terms of assembly, the RNAP catalytic core consists of 2 alpha, 1 beta, 1 beta' and 1 omega subunit. When a sigma factor is associated with the core the holoenzyme is formed, which can initiate transcription. Mg(2+) is required as a cofactor. Requires Zn(2+) as cofactor.

The catalysed reaction is RNA(n) + a ribonucleoside 5'-triphosphate = RNA(n+1) + diphosphate. In terms of biological role, DNA-dependent RNA polymerase catalyzes the transcription of DNA into RNA using the four ribonucleoside triphosphates as substrates. This is DNA-directed RNA polymerase subunit beta' from Ehrlichia ruminantium (strain Gardel).